The following is a 107-amino-acid chain: EPIDERMAL PATTERNING FACTOR-like protein 3 (107 aa).

A signal peptide spans 1–24; that stretch reads MEYMFLLMSKFFFVFPIIIYIGPA. Disulfide bonds link cysteine 64-cysteine 102, cysteine 68-cysteine 74, and cysteine 71-cysteine 104.

Belongs to the plant cysteine rich small secretory peptide family. Epidermal patterning factor subfamily.

It localises to the secreted. Functionally, controls stomatal patterning. This is EPIDERMAL PATTERNING FACTOR-like protein 3 from Arabidopsis thaliana (Mouse-ear cress).